The chain runs to 312 residues: HPr kinase/phosphorylase (312 aa).

Active-site residues include His139 and Lys160. Residue 154–161 (GSSGVGKS) participates in ATP binding. Ser161 serves as a coordination point for Mg(2+). Asp178 acts as the Proton acceptor; for phosphorylation activity. Proton donor; for dephosphorylation activity in catalysis. The interval 202–211 (LEIRGLGIIN) is important for the catalytic mechanism of both phosphorylation and dephosphorylation. Glu203 lines the Mg(2+) pocket. The active site involves Arg244. The segment at 265 to 270 (PVRPGR) is important for the catalytic mechanism of dephosphorylation.

Belongs to the HPrK/P family. Homohexamer. Mg(2+) serves as cofactor.

It carries out the reaction [HPr protein]-L-serine + ATP = [HPr protein]-O-phospho-L-serine + ADP + H(+). The enzyme catalyses [HPr protein]-O-phospho-L-serine + phosphate + H(+) = [HPr protein]-L-serine + diphosphate. Functionally, catalyzes the ATP- as well as the pyrophosphate-dependent phosphorylation of a specific serine residue in HPr, a phosphocarrier protein of the phosphoenolpyruvate-dependent sugar phosphotransferase system (PTS). HprK/P also catalyzes the pyrophosphate-producing, inorganic phosphate-dependent dephosphorylation (phosphorolysis) of seryl-phosphorylated HPr (P-Ser-HPr). The two antagonistic activities of HprK/P are regulated by several intracellular metabolites, which change their concentration in response to the absence or presence of rapidly metabolisable carbon sources (glucose, fructose, etc.) in the growth medium. Therefore, by controlling the phosphorylation state of HPr, HPrK/P is a sensor enzyme that plays a major role in the regulation of carbon metabolism and sugar transport: it mediates carbon catabolite repression (CCR), and regulates PTS-catalyzed carbohydrate uptake and inducer exclusion. The sequence is that of HPr kinase/phosphorylase from Listeria welshimeri serovar 6b (strain ATCC 35897 / DSM 20650 / CCUG 15529 / CIP 8149 / NCTC 11857 / SLCC 5334 / V8).